The primary structure comprises 467 residues: MEGRITQVMGPVVDVDFDSYLPAINEALDVNYDIEGHPKKLVLEVAAHIGDSRVRTIAMDMTEGLTRGTKVVARGKSIEVPVGEQVLGRIFNVVGDVIDGGDELKEPVKWSIHRTAPTFENQSTKTEMFETGIKVVDLLAPYSKGGKVGLFGGAGVGKTVVIMELIHNVAFKHSGYSVFAGVGERTREGNDLYHEMKESGVLDKVALCYGQMNEPPGARNRIAFTGLTMAEYFRDEKGLDVLMFIDNIFRYAQSGAEMSALLGRIPSAVGYQPTLASEMGKLQERITSTKKGSITSVQAVYVPADDLTDPAPASVFAHLDATTVLNRKIAEKGIYPAVDPLDSTSRILDPQVVGEDHYKTATGVQQVLQKYKDLQDIIAILGMDELSEEDKRVVERARRIEKFLSQPFFVAEVFTGSPGKYVTLQETLEGFKGILEGKYDQIPENAFYMVGGIDEVLEKAERLKANA.

Position 152-159 (152-159) interacts with ATP; the sequence is GGAGVGKT.

Belongs to the ATPase alpha/beta chains family. As to quaternary structure, F-type ATPases have 2 components, CF(1) - the catalytic core - and CF(0) - the membrane proton channel. CF(1) has five subunits: alpha(3), beta(3), gamma(1), delta(1), epsilon(1). CF(0) has three main subunits: a(1), b(2) and c(9-12). The alpha and beta chains form an alternating ring which encloses part of the gamma chain. CF(1) is attached to CF(0) by a central stalk formed by the gamma and epsilon chains, while a peripheral stalk is formed by the delta and b chains.

The protein localises to the cell inner membrane. It carries out the reaction ATP + H2O + 4 H(+)(in) = ADP + phosphate + 5 H(+)(out). Its function is as follows. Produces ATP from ADP in the presence of a proton gradient across the membrane. The catalytic sites are hosted primarily by the beta subunits. The polypeptide is ATP synthase subunit beta (Wolinella succinogenes (strain ATCC 29543 / DSM 1740 / CCUG 13145 / JCM 31913 / LMG 7466 / NCTC 11488 / FDC 602W) (Vibrio succinogenes)).